The primary structure comprises 256 residues: Methylesterase 9 (256 aa).

The active-site Acyl-ester intermediate is S78. Catalysis depends on charge relay system residues D206 and H234.

Belongs to the AB hydrolase superfamily. Methylesterase family.

It catalyses the reaction methyl (indol-3-yl)acetate + H2O = (indol-3-yl)acetate + methanol + H(+). The catalysed reaction is methyl (-)-jasmonate + H2O = jasmonate + methanol + H(+). The enzyme catalyses methyl salicylate + H2O = salicylate + methanol + H(+). Its pathway is plant hormone biosynthesis. It functions in the pathway lipid metabolism; oxylipin biosynthesis. Its activity is regulated as follows. Esterase activity is down-regulated by salicylic acid (SA). Its function is as follows. Methylesterase shown to have carboxylesterase activity, methyl indole-3-acetic acid (MeIAA) esterase activity, methyl salicylate (MeSA) esterase activity and methyl jasmonate (MeJA) esterase activity in vitro. Required to convert methyl salicylate (MeSA) to salicylic acid (SA) as part of the signal transduction pathways that activate systemic acquired resistance in systemic tissue. MeSA is believed to be an inactive form that needs to be demethylated to exert a biological effect. The sequence is that of Methylesterase 9 from Arabidopsis thaliana (Mouse-ear cress).